The sequence spans 1587 residues: Pentafunctional AROM polypeptide (1587 aa).

Positions 1–384 (MIEPTKISIL…YEPRASVVAN (384 aa)) are 3-dehydroquinate synthase. NAD(+) contacts are provided by residues 44-46 (DTN), 81-84 (EVSK), 114-116 (GGV), and D119. R130 provides a ligand contact to 7-phospho-2-dehydro-3-deoxy-D-arabino-heptonate. 139–140 (TT) is a binding site for NAD(+). 7-phospho-2-dehydro-3-deoxy-D-arabino-heptonate-binding residues include D146 and K152. K161 is an NAD(+) binding site. N162 lines the 7-phospho-2-dehydro-3-deoxy-D-arabino-heptonate pocket. Residues 179–182 (FLET) and N190 contribute to the NAD(+) site. E194 lines the Zn(2+) pocket. Residues 194–197 (EVIK) and K250 each bind 7-phospho-2-dehydro-3-deoxy-D-arabino-heptonate. The Proton acceptor; for 3-dehydroquinate synthase activity role is filled by E260. Residues 264–268 (RNLLN) and H271 each bind 7-phospho-2-dehydro-3-deoxy-D-arabino-heptonate. H271 contacts Zn(2+). H275 functions as the Proton acceptor; for 3-dehydroquinate synthase activity in the catalytic mechanism. H287 and K356 together coordinate 7-phospho-2-dehydro-3-deoxy-D-arabino-heptonate. H287 is a binding site for Zn(2+). The interval 397–842 (VFPGVSPKST…WDTLRLKFAV (446 aa)) is EPSP synthase. The For EPSP synthase activity role is filled by C824. Residues 864–1055 (SASVFIIGMR…KKKQHSFFVS (192 aa)) form a shikimate kinase region. Position 871–878 (871–878 (GMRGAGKT)) interacts with ATP. Positions 1056-1276 (LTLPDLRPAG…AAPGQLSATE (221 aa)) are 3-dehydroquinase. The active-site Proton acceptor; for 3-dehydroquinate dehydratase activity is the H1179. K1207 functions as the Schiff-base intermediate with substrate; for 3-dehydroquinate dehydratase activity in the catalytic mechanism. Positions 1289–1587 (KKRFALFGTP…RDAVLGTKAD (299 aa)) are shikimate dehydrogenase.

The protein in the N-terminal section; belongs to the sugar phosphate cyclases superfamily. Dehydroquinate synthase family. It in the 2nd section; belongs to the EPSP synthase family. This sequence in the 3rd section; belongs to the shikimate kinase family. In the 4th section; belongs to the type-I 3-dehydroquinase family. The protein in the C-terminal section; belongs to the shikimate dehydrogenase family. In terms of assembly, homodimer. Zn(2+) serves as cofactor.

It is found in the cytoplasm. It catalyses the reaction 7-phospho-2-dehydro-3-deoxy-D-arabino-heptonate = 3-dehydroquinate + phosphate. The catalysed reaction is 3-dehydroquinate = 3-dehydroshikimate + H2O. It carries out the reaction shikimate + NADP(+) = 3-dehydroshikimate + NADPH + H(+). The enzyme catalyses shikimate + ATP = 3-phosphoshikimate + ADP + H(+). It catalyses the reaction 3-phosphoshikimate + phosphoenolpyruvate = 5-O-(1-carboxyvinyl)-3-phosphoshikimate + phosphate. The protein operates within metabolic intermediate biosynthesis; chorismate biosynthesis; chorismate from D-erythrose 4-phosphate and phosphoenolpyruvate: step 2/7. It functions in the pathway metabolic intermediate biosynthesis; chorismate biosynthesis; chorismate from D-erythrose 4-phosphate and phosphoenolpyruvate: step 3/7. Its pathway is metabolic intermediate biosynthesis; chorismate biosynthesis; chorismate from D-erythrose 4-phosphate and phosphoenolpyruvate: step 4/7. It participates in metabolic intermediate biosynthesis; chorismate biosynthesis; chorismate from D-erythrose 4-phosphate and phosphoenolpyruvate: step 5/7. The protein operates within metabolic intermediate biosynthesis; chorismate biosynthesis; chorismate from D-erythrose 4-phosphate and phosphoenolpyruvate: step 6/7. Functionally, the AROM polypeptide catalyzes 5 consecutive enzymatic reactions in prechorismate polyaromatic amino acid biosynthesis. The chain is Pentafunctional AROM polypeptide from Aspergillus clavatus (strain ATCC 1007 / CBS 513.65 / DSM 816 / NCTC 3887 / NRRL 1 / QM 1276 / 107).